A 433-amino-acid polypeptide reads, in one-letter code: tRNA(Ile2) 2-agmatinylcytidine synthetase TiaS (433 aa).

This sequence belongs to the TiaS family.

The protein localises to the cytoplasm. The catalysed reaction is cytidine(34) in tRNA(Ile2) + agmatine + ATP + H2O = 2-agmatinylcytidine(34) in tRNA(Ile2) + AMP + 2 phosphate + 2 H(+). Functionally, ATP-dependent agmatine transferase that catalyzes the formation of 2-agmatinylcytidine (agm2C) at the wobble position (C34) of tRNA(Ile2), converting the codon specificity from AUG to AUA. The protein is tRNA(Ile2) 2-agmatinylcytidine synthetase TiaS of Methanopyrus kandleri (strain AV19 / DSM 6324 / JCM 9639 / NBRC 100938).